Here is a 204-residue protein sequence, read N- to C-terminus: Large ribosomal subunit protein bL25 (204 aa).

It belongs to the bacterial ribosomal protein bL25 family. CTC subfamily. In terms of assembly, part of the 50S ribosomal subunit; part of the 5S rRNA/L5/L18/L25 subcomplex. Contacts the 5S rRNA. Binds to the 5S rRNA independently of L5 and L18.

Functionally, this is one of the proteins that binds to the 5S RNA in the ribosome where it forms part of the central protuberance. The sequence is that of Large ribosomal subunit protein bL25 from Pseudomonas aeruginosa (strain LESB58).